We begin with the raw amino-acid sequence, 537 residues long: CTP synthase (537 aa).

The tract at residues 1–265 is amidoligase domain; sequence MTKFIFVTGG…GKYLIKRLKL (265 aa). S13 provides a ligand contact to CTP. S13 serves as a coordination point for UTP. 14 to 19 lines the ATP pocket; that stretch reads GLGKGI. Position 54 (Y54) interacts with L-glutamine. D71 is an ATP binding site. Mg(2+)-binding residues include D71 and E139. CTP contacts are provided by residues 146–148, 186–191, and K222; these read DIE and KTKPTQ. Residues 186 to 191 and K222 each bind UTP; that span reads KTKPTQ. Positions 290-532 constitute a Glutamine amidotransferase type-1 domain; it reads EIAIVGKYVK…VRAAKEYKQE (243 aa). G351 provides a ligand contact to L-glutamine. C378 serves as the catalytic Nucleophile; for glutamine hydrolysis. L-glutamine-binding positions include 379–382, E402, and R459; that span reads FGFQ. Active-site residues include H505 and E507.

Belongs to the CTP synthase family. As to quaternary structure, homotetramer.

The enzyme catalyses UTP + L-glutamine + ATP + H2O = CTP + L-glutamate + ADP + phosphate + 2 H(+). It catalyses the reaction L-glutamine + H2O = L-glutamate + NH4(+). It carries out the reaction UTP + NH4(+) + ATP = CTP + ADP + phosphate + 2 H(+). It participates in pyrimidine metabolism; CTP biosynthesis via de novo pathway; CTP from UDP: step 2/2. Its activity is regulated as follows. Allosterically activated by GTP, when glutamine is the substrate; GTP has no effect on the reaction when ammonia is the substrate. The allosteric effector GTP functions by stabilizing the protein conformation that binds the tetrahedral intermediate(s) formed during glutamine hydrolysis. Inhibited by the product CTP, via allosteric rather than competitive inhibition. Its function is as follows. Catalyzes the ATP-dependent amination of UTP to CTP with either L-glutamine or ammonia as the source of nitrogen. Regulates intracellular CTP levels through interactions with the four ribonucleotide triphosphates. This is CTP synthase from Pyrococcus horikoshii (strain ATCC 700860 / DSM 12428 / JCM 9974 / NBRC 100139 / OT-3).